The sequence spans 120 residues: Holo-[acyl-carrier-protein] synthase (120 aa).

Residues aspartate 8 and glutamate 58 each contribute to the Mg(2+) site.

It belongs to the P-Pant transferase superfamily. AcpS family. It depends on Mg(2+) as a cofactor.

It localises to the cytoplasm. It catalyses the reaction apo-[ACP] + CoA = holo-[ACP] + adenosine 3',5'-bisphosphate + H(+). Its function is as follows. Transfers the 4'-phosphopantetheine moiety from coenzyme A to a Ser of acyl-carrier-protein. This chain is Holo-[acyl-carrier-protein] synthase, found in Streptococcus pneumoniae (strain Hungary19A-6).